A 362-amino-acid chain; its full sequence is Transcription factor bHLH133 (362 aa).

The bHLH domain maps to 209–258 (LQVPSSQSTLKVRKEKLGGRIASLHQLVSPFGKTDTASVLSEAIGYIRFL).

The protein belongs to the bHLH protein family. Homodimer.

It localises to the nucleus. The sequence is that of Transcription factor bHLH133 (BHLH133) from Arabidopsis thaliana (Mouse-ear cress).